Here is a 329-residue protein sequence, read N- to C-terminus: Nitrogenase iron-iron protein beta chain (329 aa).

Residues C20, C45, C104, and S143 each contribute to the [8Fe-7S] cluster site. The disordered stretch occupies residues 213–288 (SADGSLVSHG…EEGDGKPIPQ (76 aa)). A compositionally biased stretch (basic residues) spans 257–271 (RSRRSSARPRSHPQY).

This sequence belongs to the NifD/NifK/NifE/NifN family. As to quaternary structure, hexamer of two alpha, two beta, and two delta chains. [8Fe-7S] cluster is required as a cofactor.

It catalyses the reaction N2 + 8 reduced [2Fe-2S]-[ferredoxin] + 16 ATP + 16 H2O = H2 + 8 oxidized [2Fe-2S]-[ferredoxin] + 2 NH4(+) + 16 ADP + 16 phosphate + 6 H(+). Functionally, this iron-iron protein is part of the nitrogenase complex that catalyzes the key enzymatic reactions in nitrogen fixation. Other nitrogenase complexes utilize a molybdenum-iron protein or a vanadium-iron protein. The polypeptide is Nitrogenase iron-iron protein beta chain (anfK) (Ruminiclostridium hungatei (Clostridium hungatei)).